The chain runs to 51 residues: Large ribosomal subunit protein bL33 (51 aa).

The tract at residues 1–24 is disordered; it reads MREKIRLNSSAGTGHFYTTDKNKR.

The protein belongs to the bacterial ribosomal protein bL33 family.

This chain is Large ribosomal subunit protein bL33, found in Cellvibrio japonicus (strain Ueda107) (Pseudomonas fluorescens subsp. cellulosa).